The sequence spans 489 residues: tRNA(Ile)-lysidine synthase (489 aa).

35-40 (SGGLDS) contributes to the ATP binding site.

This sequence belongs to the tRNA(Ile)-lysidine synthase family.

It is found in the cytoplasm. It catalyses the reaction cytidine(34) in tRNA(Ile2) + L-lysine + ATP = lysidine(34) in tRNA(Ile2) + AMP + diphosphate + H(+). Functionally, ligates lysine onto the cytidine present at position 34 of the AUA codon-specific tRNA(Ile) that contains the anticodon CAU, in an ATP-dependent manner. Cytidine is converted to lysidine, thus changing the amino acid specificity of the tRNA from methionine to isoleucine. The protein is tRNA(Ile)-lysidine synthase of Burkholderia pseudomallei (strain K96243).